We begin with the raw amino-acid sequence, 216 residues long: Deoxyribose-phosphate aldolase (216 aa).

Residue aspartate 89 is the Proton donor/acceptor of the active site. Lysine 153 acts as the Schiff-base intermediate with acetaldehyde in catalysis. The Proton donor/acceptor role is filled by lysine 182.

This sequence belongs to the DeoC/FbaB aldolase family. DeoC type 1 subfamily.

The protein resides in the cytoplasm. It carries out the reaction 2-deoxy-D-ribose 5-phosphate = D-glyceraldehyde 3-phosphate + acetaldehyde. The protein operates within carbohydrate degradation; 2-deoxy-D-ribose 1-phosphate degradation; D-glyceraldehyde 3-phosphate and acetaldehyde from 2-deoxy-alpha-D-ribose 1-phosphate: step 2/2. Functionally, catalyzes a reversible aldol reaction between acetaldehyde and D-glyceraldehyde 3-phosphate to generate 2-deoxy-D-ribose 5-phosphate. This is Deoxyribose-phosphate aldolase from Treponema denticola (strain ATCC 35405 / DSM 14222 / CIP 103919 / JCM 8153 / KCTC 15104).